Consider the following 179-residue polypeptide: MVVLDKKLLERLTSRKVPLEELEDMEKRCFLSTFTYQDAFDLGTYIRNAVKENFPEKPVAIDISLPNGHCLFRTVTYGGSALDNDFWIQRKKKTALRFGHSSFYMGCKKGDKTPEEKFFVDSKEYAFHGGAVLIQSERSDYPYACLTISGLKQEEDHLMAVSSLIAFANESLEEDLNLD.

It belongs to the UPF0303 family.

Its subcellular location is the cytoplasm. This Saccharomyces cerevisiae (strain ATCC 204508 / S288c) (Baker's yeast) protein is UPF0303 protein YBR137W.